The primary structure comprises 523 residues: Putative F-box protein At1g30925 (523 aa).

An F-box domain is found at 4 to 44 (FPNDDLVYEILLRLPAKSVARCSCVSKLRRSILSRQDFTEL).

The chain is Putative F-box protein At1g30925 from Arabidopsis thaliana (Mouse-ear cress).